Here is an 868-residue protein sequence, read N- to C-terminus: Sporulation-specific protein 75 (868 aa).

Residues 1–34 lie on the Extracellular side of the membrane; that stretch reads MNATKELTFNLLNKFQDKERFGSAQRHAGISLKG. Asn2 carries an N-linked (GlcNAc...) asparagine glycan. A helical transmembrane segment spans residues 35–55; that stretch reads FISGILFSFLYFLFQLSLFII. Over 56 to 127 the chain is Cytoplasmic; that stretch reads LRSRFKTIYQ…DNYLFLRFLK (72 aa). The chain crosses the membrane as a helical span at residues 128-148; sequence LLIFFFAVLSIINIPILIPIH. Topologically, residues 149–187 are extracellular; it reads YFSRDILKENEGERYEQSFRTTSKLDKWTMSNLSPNSSN. A glycan (N-linked (GlcNAc...) asparagine) is linked at Asn184. A helical transmembrane segment spans residues 188–208; sequence TLICHLFLSIFVVLWFHFILS. Residues 209–481 are Cytoplasmic-facing; it reads SELRFVNRLG…AKYFSANILR (273 aa). The chain crosses the membrane as a helical span at residues 482–502; the sequence is IFVIIGWILPVAFLGLISQIP. Residue Asn503 is glycosylated (N-linked (GlcNAc...) asparagine). At 503 to 527 the chain is on the extracellular side; that stretch reads NISSLIPFTKIIHFQSPFIREVAKN. A helical transmembrane segment spans residues 528–548; the sequence is LIPIVTLIIIIEIVPYFFRWL. Residues 549–569 lie on the Cytoplasmic side of the membrane; that stretch reads SYLRGLKTGAQIEADVQNWYF. The chain crosses the membrane as a helical span at residues 570–590; the sequence is VFVFIHLFVVVTISSGFSIII. Over 591-611 the chain is Extracellular; the sequence is ERLLNNPVSIPALLANDLPKC. A helical transmembrane segment spans residues 612-632; it reads ANFFCSFVLIRGMAYAGGNLL. At 633–660 the chain is on the cytoplasmic side; it reads RIKELLFELFYYKWKRSTPHAQFKRLKT. Residues 661–683 form a helical membrane-spanning segment; that stretch reads SLFFQLGSIYPIFSVLGCIGIIY. Topologically, residues 684–692 are extracellular; sequence SVVAPIILL. A helical membrane pass occupies residues 693–713; it reads LCCISFSMVFFSFSYLFKYQY. Residues 714–730 are Cytoplasmic-facing; the sequence is NKENYSETFGKLYIQAL. A helical membrane pass occupies residues 731–751; the sequence is MQLYAGIYFMEFCLLGLFTLF. Over 752 to 753 the chain is Extracellular; the sequence is DQ. The chain crosses the membrane as a helical span at residues 754–774; the sequence is YTLSTIMLVVFALTVITHSKI. Residues 775–868 are Cytoplasmic-facing; it reads SKQIKSKPQR…DCHLENSHLH (94 aa).

This sequence belongs to the CSC1 (TC 1.A.17) family.

The protein localises to the membrane. Its function is as follows. Acts as an osmosensitive calcium-permeable cation channel. Required for spore wall assembly and ascus formation. The polypeptide is Sporulation-specific protein 75 (SPO75) (Saccharomyces cerevisiae (strain ATCC 204508 / S288c) (Baker's yeast)).